We begin with the raw amino-acid sequence, 108 residues long: Large ribosomal subunit protein uL24 (108 aa).

The protein belongs to the universal ribosomal protein uL24 family. As to quaternary structure, part of the 50S ribosomal subunit.

In terms of biological role, one of two assembly initiator proteins, it binds directly to the 5'-end of the 23S rRNA, where it nucleates assembly of the 50S subunit. Its function is as follows. One of the proteins that surrounds the polypeptide exit tunnel on the outside of the subunit. The chain is Large ribosomal subunit protein uL24 from Frankia casuarinae (strain DSM 45818 / CECT 9043 / HFP020203 / CcI3).